The chain runs to 918 residues: Glutamate receptor ionotropic, kainate 1 (918 aa).

Residues 1–30 form the signal peptide; the sequence is MELGTLLAQPGLWTRDTSWALLYFLCYILP. The Extracellular portion of the chain corresponds to 31 to 576; the sequence is QTAPQVLRIG…VFSFLNPLSP (546 aa). N-linked (GlcNAc...) asparagine glycosylation is found at N68, N74, N276, N379, N428, N439, and N446. Residues P531, T533, and R538 each contribute to the L-glutamate site. A glycan (N-linked (GlcNAc...) asparagine) is linked at N561. The chain crosses the membrane as a helical span at residues 577-597; sequence DIWMYVLLACLGVSCVLFVIA. The Cytoplasmic segment spans residues 598–653; sequence RFTPYEWYNPHPCNPDSDVVENNFTLLNSFWFGVGALMQQGSELMPKALSTRIVGG. A helical membrane pass occupies residues 654 to 674; sequence IWWFFTLIIISSYTANLAAFL. The Extracellular portion of the chain corresponds to 675–834; it reads TVERMESPID…KEASALGVEN (160 aa). S704 and T705 together coordinate L-glutamate. The residue at position 725 (S725) is a Phosphoserine; by PKC. E753 lines the L-glutamate pocket. T761 is modified (phosphothreonine; by PKC). The cysteines at positions 765 and 819 are disulfide-linked. An N-linked (GlcNAc...) asparagine glycan is attached at N766. A helical membrane pass occupies residues 835–855; it reads IGGIFIVLAAGLVLSVFVAIG. The Cytoplasmic portion of the chain corresponds to 856–918; sequence EFIYKSRKNN…IRKQSSVHTV (63 aa).

This sequence belongs to the glutamate-gated ion channel (TC 1.A.10.1) family. GRIK1 subfamily. In terms of assembly, homotetramer or heterotetramer of pore-forming glutamate receptor subunits. Tetramers may be formed by the dimerization of dimers. Can form functional heteromeric receptors with GRIK4 and GRIK5. Interacts with KLHL17.

The protein localises to the cell membrane. The protein resides in the postsynaptic cell membrane. The catalysed reaction is Ca(2+)(in) = Ca(2+)(out). Ionotropic glutamate receptor that functions as a cation-permeable ligand-gated ion channel, gated by L-glutamate and the glutamatergic agonist kainic acid. L-glutamate acts as an excitatory neurotransmitter at many synapses in the central nervous system. Binding of the excitatory neurotransmitter L-glutamate induces a conformation change, leading to the opening of the cation channel, and thereby converts the chemical signal to an electrical impulse. The receptor then desensitizes rapidly and enters a transient inactive state, characterized by the presence of bound agonist. The sequence is that of Glutamate receptor ionotropic, kainate 1 (GRIK1) from Macaca fascicularis (Crab-eating macaque).